Consider the following 353-residue polypeptide: Glutamine synthetase cytosolic isozyme 1-5 (353 aa).

An N-acetylthreonine modification is found at threonine 2. Serine 3 carries the post-translational modification Phosphoserine. Positions 19–99 constitute a GS beta-grasp domain; sequence IIAEYIWIGG…VMCDAYRPAG (81 aa). Positions 106 to 353 constitute a GS catalytic domain; sequence NRHKAVKIFD…TSMIAETTIL (248 aa).

It belongs to the glutamine synthetase family. Homooctamer. In terms of tissue distribution, not expressed in roots.

The protein resides in the cytoplasm. It catalyses the reaction L-glutamate + NH4(+) + ATP = L-glutamine + ADP + phosphate + H(+). This Arabidopsis thaliana (Mouse-ear cress) protein is Glutamine synthetase cytosolic isozyme 1-5 (GLN1-5).